Consider the following 38-residue polypeptide: Conotoxin FVIA (38 aa).

A propeptide spanning residues 1–12 (ILSLSLLDRSTR) is cleaved from the precursor. 3 cysteine pairs are disulfide-bonded: cysteine 13-cysteine 28, cysteine 20-cysteine 32, and cysteine 27-cysteine 37. A Cysteine amide modification is found at cysteine 37.

Belongs to the conotoxin O1 superfamily. Expressed by the venom duct.

Its subcellular location is the secreted. Functionally, omega-conotoxins act at presynaptic membranes, they bind and block voltage-gated calcium channels (Cav). This peptide reversibly and selectively inhibits Cav2.2/CACNA1B (IC(50)=11.5 nM) voltage-gated calcium channels. Channel time recovery after toxin exposure is short (about 50 seconds). In vivo, it effectively and dose-dependently reduces nociceptive behavior in the formalin test and in neuropathic pain models, and reduces mechanical and thermal allodynia in the tail nerve injury rat model. It also shows significant analgesic effects on writhing in mouse neurotransmitter- and cytokine-induced pain models, though it has no effect on acute thermal pain and interferon-gamma-induced pain. It also depresses blood pressure immediately after administration, but pressure recovers relatively quickly and completely. The protein is Conotoxin FVIA of Conus fulmen (Thunderbolt cone).